Reading from the N-terminus, the 578-residue chain is Octopamine receptor 2 (578 aa).

At 1-84 the chain is on the extracellular side; it reads MMSFPIALFA…YDSITIFITV (84 aa). Residues N13, N38, N46, and N59 are each glycosylated (N-linked (GlcNAc...) asparagine). The helical transmembrane segment at 85–107 threads the bilayer; that stretch reads AVVLTLITLWTILGNFFVLMALY. Topologically, residues 108-117 are cytoplasmic; that stretch reads RYGTLRTMSN. The helical transmembrane segment at 118-139 threads the bilayer; the sequence is CLIGNLAISDLLLAVTVLPIST. Residues 140–156 lie on the Extracellular side of the membrane; it reads VHDLLGYWVFGEFTCTL. An intrachain disulfide couples C154 to C239. A helical membrane pass occupies residues 157-177; the sequence is WLCMDVLYCTASIWGLCTVAF. The Cytoplasmic portion of the chain corresponds to 178–197; sequence DRYLATVYPVWYHDQRSVRK. Residues 198-220 form a helical membrane-spanning segment; sequence AVGCIVFVWIFSIVISFAPFIGW. Over 221–251 the chain is Extracellular; the sequence is QHMIPSFFSFNASIQRYQCILFTSSSYVLYS. Residue N231 is glycosylated (N-linked (GlcNAc...) asparagine). A helical transmembrane segment spans residues 252–272; it reads SMGSFVIPAILMAFMYVRIFV. The Cytoplasmic segment spans residues 273 to 495; that stretch reads VLHNQSRGVK…ELREQRATKR (223 aa). A helical membrane pass occupies residues 496-517; sequence MLLIMACFCVCWMPFLFMYILR. The Extracellular portion of the chain corresponds to 518–531; that stretch reads SVCDTCHMNQHFVA. A helical transmembrane segment spans residues 532-553; sequence AIIWLGYVNSSLNPVLYTLFND. Over 554-578 the chain is Cytoplasmic; it reads DFKVAFKRLIGARSPSAYRSPGPRR.

This sequence belongs to the G-protein coupled receptor 1 family.

The protein resides in the cell membrane. In terms of biological role, receptor for octopamine. Octopamine (OA) is a neurotransmitter, neurohormone, and neuromodulator in invertebrates. This receptor induces a long lasting opening of voltage- independent chloride channels, a process which seems to involve protein phosphorylation but does not require either cAPK or PKC. The rank order of potency for agonists is p-synephrine &gt; p-octopamine &gt; xylometazoline &gt; B-HT920 &gt; norepinephrine = clonidine &gt; epinephrine &gt; p-tyramine &gt; phenylephrine = oxymetazoline = mehoxamine = dopamine &gt; serotonin &gt; histamine. For antagonists, the rank order is rauwolscine = mianserin &gt; phentolamine &gt; chlorpromazine &gt; spiperone &gt; yohimbine &gt; propanolol &gt; alprenolol &gt; prazosine &gt; pindolol. This chain is Octopamine receptor 2, found in Lymnaea stagnalis (Great pond snail).